Here is a 147-residue protein sequence, read N- to C-terminus: MVHFTAEEKAAVTSLWNKMNVEEAGGEALGRLLVVYPWTQRFFDSFGNLSSPSAILGNPKVKAHGKKVLTSFGDAIKNMDNLKTTFAKLSELHCDKLHVDPENFKLLGNVMVIILATHFGKEFTPEVQAAWQKLVSAVAIALAHKYH.

The 145-residue stretch at 3–147 folds into the Globin domain; the sequence is HFTAEEKAAV…VAIALAHKYH (145 aa). Residues serine 14 and serine 51 each carry the phosphoserine modification. Heme b-binding residues include histidine 64 and histidine 93.

It belongs to the globin family. Heterotetramer of two alpha chains and two epsilon chains in early embryonic hemoglobin Gower-2; two zeta chains and two epsilon chains in early embryonic hemoglobin Gower-1. Red blood cells.

The epsilon chain is a beta-type chain of early mammalian embryonic hemoglobin. In Symphalangus syndactylus (Siamang), this protein is Hemoglobin subunit epsilon (HBE1).